The following is a 572-amino-acid chain: Sulfite reductase [NADPH] hemoprotein beta-component (572 aa).

Cys-436, Cys-442, Cys-481, and Cys-485 together coordinate [4Fe-4S] cluster. Siroheme is bound at residue Cys-485.

Belongs to the nitrite and sulfite reductase 4Fe-4S domain family. As to quaternary structure, alpha(8)-beta(8). The alpha component is a flavoprotein, the beta component is a hemoprotein. Siroheme serves as cofactor. It depends on [4Fe-4S] cluster as a cofactor.

The catalysed reaction is hydrogen sulfide + 3 NADP(+) + 3 H2O = sulfite + 3 NADPH + 4 H(+). It functions in the pathway sulfur metabolism; hydrogen sulfide biosynthesis; hydrogen sulfide from sulfite (NADPH route): step 1/1. Component of the sulfite reductase complex that catalyzes the 6-electron reduction of sulfite to sulfide. This is one of several activities required for the biosynthesis of L-cysteine from sulfate. This Bacillus pumilus (strain SAFR-032) protein is Sulfite reductase [NADPH] hemoprotein beta-component.